The primary structure comprises 133 residues: Probable non-specific lipid-transfer protein 2 (133 aa).

Residues 1-31 (MRTVSMAALVVIAAALAWTSSAEPAPAPAPG) form the signal peptide. Cystine bridges form between C35–C83, C45–C60, C61–C106, and C81–C121.

It belongs to the plant LTP family.

Its function is as follows. Plant non-specific lipid-transfer proteins transfer phospholipids as well as galactolipids across membranes. May play a role in wax or cutin deposition in the cell walls of expanding epidermal cells and certain secretory tissues. This is Probable non-specific lipid-transfer protein 2 from Parietaria judaica (Pellitory-of-the-wall).